The sequence spans 121 residues: Insulin-like peptide 01 (121 aa).

The N-terminal stretch at 1–24 (MDSFTRASLITFLILLTLTSLVFS) is a signal peptide. Positions 25–45 (NGCMMRGGCFKTSEDAHRLIM) are excised as a propeptide. 3 disulfide bridges follow: Cys-52/Cys-107, Cys-64/Cys-120, and Cys-106/Cys-111. A propeptide spans 69 to 97 (RRRKRDLRRKLGIVMDRKESHKFLRRRKR) (c peptide).

The protein belongs to the insulin family.

The protein resides in the secreted. Insulin decreases blood glucose concentration. May have evolved to activate insulin receptors (INSR) in vertebrates. Molecular docking studies reveals unique interaction with the human insulin receptor. In vivo, insulin-like peptide injection reduces blood glucose levels in two models of zebrafish diabetes (streptozotocin- and glucose-induced). Also shorter swimming distance of zebrafish larvae, an effect which is not observed with human insulin. This Exaiptasia diaphana (Tropical sea anemone) protein is Insulin-like peptide 01.